The following is a 92-amino-acid chain: Small ribosomal subunit protein uS17 (92 aa).

It belongs to the universal ribosomal protein uS17 family. As to quaternary structure, part of the 30S ribosomal subunit.

One of the primary rRNA binding proteins, it binds specifically to the 5'-end of 16S ribosomal RNA. The protein is Small ribosomal subunit protein uS17 of Corynebacterium urealyticum (strain ATCC 43042 / DSM 7109).